The following is a 248-amino-acid chain: ATP synthase subunit a, chloroplastic (248 aa).

Transmembrane regions (helical) follow at residues 38–58 (QVLI…AIAV), 96–116 (VPFI…GALL), 135–155 (INTT…AGLT), 200–220 (LVVV…VMFL), and 221–241 (GLFT…AYIG).

The protein belongs to the ATPase A chain family. As to quaternary structure, F-type ATPases have 2 components, CF(1) - the catalytic core - and CF(0) - the membrane proton channel. CF(1) has five subunits: alpha(3), beta(3), gamma(1), delta(1), epsilon(1). CF(0) has four main subunits: a, b, b' and c.

Its subcellular location is the plastid. The protein localises to the chloroplast thylakoid membrane. Its function is as follows. Key component of the proton channel; it plays a direct role in the translocation of protons across the membrane. The sequence is that of ATP synthase subunit a, chloroplastic from Nymphaea alba (White water-lily).